A 200-amino-acid polypeptide reads, in one-letter code: Protein GrpE (200 aa).

A compositionally biased stretch (polar residues) spans 1 to 11 (MSNQTNKAQDN). Positions 1–29 (MSNQTNKAQDNQVEEIVEGELLNENGTEA) are disordered.

This sequence belongs to the GrpE family. In terms of assembly, homodimer.

The protein localises to the cytoplasm. Functionally, participates actively in the response to hyperosmotic and heat shock by preventing the aggregation of stress-denatured proteins, in association with DnaK and GrpE. It is the nucleotide exchange factor for DnaK and may function as a thermosensor. Unfolded proteins bind initially to DnaJ; upon interaction with the DnaJ-bound protein, DnaK hydrolyzes its bound ATP, resulting in the formation of a stable complex. GrpE releases ADP from DnaK; ATP binding to DnaK triggers the release of the substrate protein, thus completing the reaction cycle. Several rounds of ATP-dependent interactions between DnaJ, DnaK and GrpE are required for fully efficient folding. The polypeptide is Protein GrpE (Shewanella halifaxensis (strain HAW-EB4)).